Reading from the N-terminus, the 150-residue chain is Catabolic 3-dehydroquinase 1 (150 aa).

The active-site Proton acceptor is the Tyr-24. 3 residues coordinate substrate: Asn-75, His-81, and Asp-88. The Proton donor role is filled by His-101. Residues 102-103 (VS) and Arg-112 contribute to the substrate site.

It belongs to the type-II 3-dehydroquinase family. As to quaternary structure, homododecamer. Adopts a ring-like structure, composed of an arrangement of two hexameric rings stacked on top of one another.

It carries out the reaction 3-dehydroquinate = 3-dehydroshikimate + H2O. Its pathway is aromatic compound metabolism; 3,4-dihydroxybenzoate biosynthesis; 3,4-dihydroxybenzoate from 3-dehydroquinate: step 1/2. In terms of biological role, is involved in the catabolism of quinate. Allows the utilization of quinate as carbon source via the beta-ketoadipate pathway. The polypeptide is Catabolic 3-dehydroquinase 1 (Aspergillus fumigatus (strain ATCC MYA-4609 / CBS 101355 / FGSC A1100 / Af293) (Neosartorya fumigata)).